The chain runs to 566 residues: Lactase-like protein (566 aa).

A signal peptide spans Met-1–Thr-20. Residues Ala-21–Glu-540 are Extracellular-facing. Residues Asn-170 and Asn-244 are each glycosylated (N-linked (GlcNAc...) asparagine). Residues Ile-541–Leu-561 traverse the membrane as a helical segment. The Cytoplasmic segment spans residues Leu-562 to Gly-566.

It belongs to the glycosyl hydrolase 1 family. Klotho subfamily. In terms of assembly, may form dimers. Strongly expressed in the lens of the eye, where it localizes to the equatorial epithelium and outer layers of newly extending fiber cells (at protein level). May also be expressed in kidney and skin. However, another study suggests that expression is specific to eye and is minimal in other tissues.

It is found in the endoplasmic reticulum membrane. Plays a role in formation of the lens suture in the eye, which is important for normal optical properties of the lens. The sequence is that of Lactase-like protein (Lctl) from Mus musculus (Mouse).